A 465-amino-acid chain; its full sequence is Poly(A) polymerase I (465 aa).

Residues D80, D82, and D162 contribute to the active site. The disordered stretch occupies residues 430–465 (APPEQKGMLNELDDDPAPRRRRSRPRKRAPRREGTV). The segment covering 448–459 (RRRRSRPRKRAP) has biased composition (basic residues).

The protein belongs to the tRNA nucleotidyltransferase/poly(A) polymerase family.

The enzyme catalyses RNA(n) + ATP = RNA(n)-3'-adenine ribonucleotide + diphosphate. Its function is as follows. Adds poly(A) tail to the 3' end of many RNAs, which usually targets these RNAs for decay. Plays a significant role in the global control of gene expression, through influencing the rate of transcript degradation, and in the general RNA quality control. The sequence is that of Poly(A) polymerase I from Salmonella typhi.